The following is a 294-amino-acid chain: Nucleoside-specific channel-forming protein Tsx (294 aa).

A signal peptide spans methionine 1 to alanine 22.

It belongs to the nucleoside-specific channel-forming outer membrane porin (Tsx) (TC 1.B.10) family.

It is found in the cell outer membrane. Its function is as follows. Functions as a substrate-specific channel for nucleosides and deoxynucleosides. Also functions in albicidin uptake and as receptor for colicin K. Also is a receptor for several Tsx-specific bacteriophages. This Klebsiella pneumoniae protein is Nucleoside-specific channel-forming protein Tsx.